The sequence spans 345 residues: MKSLTLRRPDDWHLHLRDGAMLEGVIGDTSRHFARAIIMPNLVPPVVTTADASAYRERILKAIPEGDRFEPLMTLYLTEDTVADDVEEGKKSGLITAVKLYPAGATTNSHGGVRDFNKAMPVLERMAKIGLPLCVHGEVTTPDVDIFDREKAFIDTVLEPLRQRLPELKVTMEHITTRDGVDYIKSSNANLAGSITTHHLIINRNAILVGGIKPHYYCLPVAKREEHRLALRAAATSGDARFFLGTDSAPHVDPLKECACGCAGIYTSINTMSCLAHVFEDENALDKLEAFASLNGPAWYGLAPNDETITLVKREEAVAFPEKIETGAGPVTVFDPMFPLHWDVN.

2 residues coordinate Zn(2+): His13 and His15. Residues 15 to 17 (HLR) and Asn41 each bind substrate. Positions 99, 136, and 174 each coordinate Zn(2+). N6-carboxylysine is present on Lys99. His136 provides a ligand contact to substrate. Leu219 serves as a coordination point for substrate. A Zn(2+)-binding site is contributed by Asp247. Asp247 is an active-site residue. Substrate contacts are provided by His251 and Ala263.

The protein belongs to the metallo-dependent hydrolases superfamily. DHOase family. Class II DHOase subfamily. In terms of assembly, homodimer. Zn(2+) is required as a cofactor.

The catalysed reaction is (S)-dihydroorotate + H2O = N-carbamoyl-L-aspartate + H(+). Its pathway is pyrimidine metabolism; UMP biosynthesis via de novo pathway; (S)-dihydroorotate from bicarbonate: step 3/3. Catalyzes the reversible cyclization of carbamoyl aspartate to dihydroorotate. This Agrobacterium fabrum (strain C58 / ATCC 33970) (Agrobacterium tumefaciens (strain C58)) protein is Dihydroorotase.